We begin with the raw amino-acid sequence, 358 residues long: Phosphoribosylformylglycinamidine cyclo-ligase (358 aa).

The protein belongs to the AIR synthase family.

Its subcellular location is the cytoplasm. The enzyme catalyses 2-formamido-N(1)-(5-O-phospho-beta-D-ribosyl)acetamidine + ATP = 5-amino-1-(5-phospho-beta-D-ribosyl)imidazole + ADP + phosphate + H(+). The protein operates within purine metabolism; IMP biosynthesis via de novo pathway; 5-amino-1-(5-phospho-D-ribosyl)imidazole from N(2)-formyl-N(1)-(5-phospho-D-ribosyl)glycinamide: step 2/2. The protein is Phosphoribosylformylglycinamidine cyclo-ligase of Chromohalobacter salexigens (strain ATCC BAA-138 / DSM 3043 / CIP 106854 / NCIMB 13768 / 1H11).